A 396-amino-acid polypeptide reads, in one-letter code: Putative arsenical pump-driving ATPase 1 (396 aa).

An ATP-binding site is contributed by 8 to 15; it reads GKGGVGKT.

It belongs to the arsA ATPase family.

It catalyses the reaction arsenite(in) + ATP + H2O = arsenite(out) + ADP + phosphate + H(+). Its function is as follows. Anion-transporting ATPase. Catalyzes the extrusion of arsenite. This Aquifex aeolicus (strain VF5) protein is Putative arsenical pump-driving ATPase 1 (arsA1).